The chain runs to 510 residues: Aromatic-L-amino-acid decarboxylase (510 aa).

Polar residues predominate over residues 1 to 17 (MSHIPISNTIPTKQTDG). Positions 1–28 (MSHIPISNTIPTKQTDGNGKANISPDKL) are disordered. T117 contributes to the substrate binding site. Pyridoxal 5'-phosphate is bound by residues A183, S184, H227, D305, and N334. H227 is a binding site for substrate. H227 is an active-site residue. K337 is modified (N6-(pyridoxal phosphate)lysine). The interval 358–384 (NAFNVDPLYLKHDMQGSAPDYRHWQIP) is disordered.

It belongs to the group II decarboxylase family. Homodimer. It depends on pyridoxal 5'-phosphate as a cofactor. As to expression, hypoderm isoform is expressed only in hypodermal epithelium and the CNS isoform only in central nervous system. Expressed in the adult head (at protein level).

The enzyme catalyses L-dopa + H(+) = dopamine + CO2. The catalysed reaction is 5-hydroxy-L-tryptophan + H(+) = serotonin + CO2. In terms of biological role, catalyzes the decarboxylation of L-3,4-dihydroxyphenylalanine (L-DOPA) to dopamine and L-5-hydroxytryptophan (5-HTP) to serotonin. Catalyzes the formation of serotonin more efficiently than dopamine. Displays no activity to tyrosine. Variation in the synthesis of bioamines may be a factor contributing to natural variation in life span. The protein is Aromatic-L-amino-acid decarboxylase (Ddc) of Drosophila melanogaster (Fruit fly).